The primary structure comprises 21 residues: Fibrinogen beta chain (21 aa).

The segment covering Glu-1–Asp-11 has biased composition (acidic residues). The disordered stretch occupies residues Glu-1–Arg-21. Tyr-6 carries the post-translational modification Sulfotyrosine.

Heterohexamer; disulfide linked. Contains 2 sets of 3 non-identical chains (alpha, beta and gamma). The 2 heterotrimers are in head to head conformation with the N-termini in a small central domain. In terms of processing, conversion of fibrinogen to fibrin is triggered by thrombin, which cleaves fibrinopeptides A and B from alpha and beta chains, and thus exposes the N-terminal polymerization sites responsible for the formation of the soft clot.

It is found in the secreted. Cleaved by the protease thrombin to yield monomers which, together with fibrinogen alpha (FGA) and fibrinogen gamma (FGG), polymerize to form an insoluble fibrin matrix. Fibrin has a major function in hemostasis as one of the primary components of blood clots. In addition, functions during the early stages of wound repair to stabilize the lesion and guide cell migration during re-epithelialization. Was originally thought to be essential for platelet aggregation, based on in vitro studies using anticoagulated blood. However subsequent studies have shown that it is not absolutely required for thrombus formation in vivo. Enhances expression of SELP in activated platelets. Maternal fibrinogen is essential for successful pregnancy. Fibrin deposition is also associated with infection, where it protects against IFNG-mediated hemorrhage. May also facilitate the antibacterial immune response via both innate and T-cell mediated pathways. This is Fibrinogen beta chain (FGB) from Bison bonasus (European bison).